The primary structure comprises 216 residues: MIF4G domain-containing protein A (216 aa).

Residues 2–199 form the MIF4G domain; it reads DSAWTALDME…LEILEFRASG (198 aa).

This sequence belongs to the MIF4GD family. As to quaternary structure, interacts with eif4g1, eif4g2 and slbp; probably tethered by SLBP to the 3'-end of mRNAs ending with the histone stem-loop, it also interacts with eif4g1 which is bound to their 5'-end.

The protein resides in the cytoplasm. Its subcellular location is the nucleus. Its function is as follows. Functions in replication-dependent translation of histone mRNAs which differ from other eukaryotic mRNAs in that they do not end with a poly-A tail but a stem-loop. May participate in circularizing those mRNAs specifically enhancing their translation. The chain is MIF4G domain-containing protein A (mif4gda) from Danio rerio (Zebrafish).